Consider the following 157-residue polypeptide: MKKKIKIFIDGACLGNPGPGGYGVIICGKKLYKEISNGYYLTTNNRMEIMAAIIALESLHDMYNIIINTDSKYLKNGITKWIKVWKNNKWKTNNNKSVKNIDLWIKLEYLSKKHFINWNWIKGHTNNIKHDRCDFLAKISAKNPNAIDKIYQKIKNF.

One can recognise an RNase H type-1 domain in the interval 1 to 142 (MKKKIKIFID…CDFLAKISAK (142 aa)). Mg(2+) contacts are provided by Asp-10, Glu-48, Asp-70, and Asp-134.

Belongs to the RNase H family. As to quaternary structure, monomer. It depends on Mg(2+) as a cofactor.

Its subcellular location is the cytoplasm. It catalyses the reaction Endonucleolytic cleavage to 5'-phosphomonoester.. Functionally, endonuclease that specifically degrades the RNA of RNA-DNA hybrids. This Wigglesworthia glossinidia brevipalpis protein is Ribonuclease H.